A 278-amino-acid chain; its full sequence is 4-diphosphocytidyl-2-C-methyl-D-erythritol kinase (278 aa).

The active site involves Lys-9. 93-103 (PLGGGLGGGSS) lines the ATP pocket. Asp-135 is a catalytic residue.

This sequence belongs to the GHMP kinase family. IspE subfamily.

The enzyme catalyses 4-CDP-2-C-methyl-D-erythritol + ATP = 4-CDP-2-C-methyl-D-erythritol 2-phosphate + ADP + H(+). It functions in the pathway isoprenoid biosynthesis; isopentenyl diphosphate biosynthesis via DXP pathway; isopentenyl diphosphate from 1-deoxy-D-xylulose 5-phosphate: step 3/6. Functionally, catalyzes the phosphorylation of the position 2 hydroxy group of 4-diphosphocytidyl-2C-methyl-D-erythritol. The protein is 4-diphosphocytidyl-2-C-methyl-D-erythritol kinase of Nitrosomonas eutropha (strain DSM 101675 / C91 / Nm57).